A 132-amino-acid chain; its full sequence is UPF0102 protein Ajs_0414 (132 aa).

A disordered region spans residues 1 to 23 (MGFLGKKVNGSAPARTTRAAGQA).

It belongs to the UPF0102 family.

This is UPF0102 protein Ajs_0414 from Acidovorax sp. (strain JS42).